The primary structure comprises 288 residues: Executioner caspase (288 aa).

Cys131 is a catalytic residue.

This sequence belongs to the peptidase C14A family.

May induce host cell apoptosis and contribute of the establishment of a special cell cleavage process in which apoppotic bodies are rescued by the virus and differentiate to form large vesicles in which virion assembles. In Spodoptera frugiperda ascovirus 1a (SfAV-1a), this protein is Executioner caspase.